A 349-amino-acid polypeptide reads, in one-letter code: UDP-N-acetylenolpyruvoylglucosamine reductase (349 aa).

The region spanning 26-197 (FDARARVAAR…VAVTFRLPKA (172 aa)) is the FAD-binding PCMH-type domain. Arginine 173 is a catalytic residue. Serine 249 serves as the catalytic Proton donor. The active site involves glutamate 345.

Belongs to the MurB family. FAD serves as cofactor.

It is found in the cytoplasm. The enzyme catalyses UDP-N-acetyl-alpha-D-muramate + NADP(+) = UDP-N-acetyl-3-O-(1-carboxyvinyl)-alpha-D-glucosamine + NADPH + H(+). It participates in cell wall biogenesis; peptidoglycan biosynthesis. Functionally, cell wall formation. The chain is UDP-N-acetylenolpyruvoylglucosamine reductase from Burkholderia pseudomallei (strain 1710b).